The primary structure comprises 504 residues: MAKIDFRNKINWRRRFRSPPRVETERDILRIFESDRGRIVNSPAIRRLQQKTQVFPLERNAAVRTRLTHSLEVQQVGRYIAKEVLSRLKELRLLEEYGLEELTGPFESVVEMACLMHDIGNPPFGHFGEAAINDWFRQRLAPGDALGQPLTDDRCEVQALRLHDGETSLNALRRKVRQDLCSFEGNAQGIRLVHTLMRMNLTWAQVGCILKYTRPAWWSEETPASHSYLMKKPGYYLAEEEYVARLRKELDLAPYNRFPLTWIMEAADDISYCVADLEDAVEKRIFSAEQLYQHLYDAWGSHEKGSLFSQVVENAWEKSRANYLKQSAEDQFFMYLRVNTLNKLVPYAARRFIDNLPAIFTGDFNHALLEDDSDCSQLLELYKNVAMKQVFSHPDVEQLELQGYRVISGLLDIYQPLLKLSLEDFSELVAQERVRRLPIASRLYQKLSTRHRLAYVEAVNKLARTAPEFALMEYYYRCRLIQDYISGMTDLYAWDEYRRLMAVE.

Residues 66–273 (RLTHSLEVQQ…MEAADDISYC (208 aa)) enclose the HD domain.

It belongs to the dGTPase family. Type 1 subfamily. In terms of assembly, homotetramer. Requires Mg(2+) as cofactor.

It catalyses the reaction dGTP + H2O = 2'-deoxyguanosine + triphosphate + H(+). In terms of biological role, dGTPase preferentially hydrolyzes dGTP over the other canonical NTPs. This chain is Deoxyguanosinetriphosphate triphosphohydrolase, found in Klebsiella pneumoniae subsp. pneumoniae (strain ATCC 700721 / MGH 78578).